The chain runs to 522 residues: ATP synthase subunit alpha, mitochondrial (522 aa).

172–179 contacts ATP; it reads GDRQTGKT.

Belongs to the ATPase alpha/beta chains family. F-type ATPases have 2 components, CF(1) - the catalytic core - and CF(0) - the membrane proton channel. CF(1) has five subunits: alpha(3), beta(3), gamma(1), delta(1), epsilon(1). CF(0) has three main subunits: a, b and c.

The protein localises to the mitochondrion. It is found in the mitochondrion inner membrane. Functionally, mitochondrial membrane ATP synthase (F(1)F(0) ATP synthase or Complex V) produces ATP from ADP in the presence of a proton gradient across the membrane which is generated by electron transport complexes of the respiratory chain. F-type ATPases consist of two structural domains, F(1) - containing the extramembraneous catalytic core, and F(0) - containing the membrane proton channel, linked together by a central stalk and a peripheral stalk. During catalysis, ATP synthesis in the catalytic domain of F(1) is coupled via a rotary mechanism of the central stalk subunits to proton translocation. Subunits alpha and beta form the catalytic core in F(1). Rotation of the central stalk against the surrounding alpha(3)beta(3) subunits leads to hydrolysis of ATP in three separate catalytic sites on the beta subunits. Subunit alpha does not bear the catalytic high-affinity ATP-binding sites. The sequence is that of ATP synthase subunit alpha, mitochondrial (ATP1) from Acanthamoeba castellanii (Amoeba).